A 195-amino-acid polypeptide reads, in one-letter code: dITP/XTP pyrophosphatase (195 aa).

Substrate is bound at residue 8 to 13; sequence SNNQGK. Residues Glu-39 and Asp-68 each coordinate Mg(2+). The active-site Proton acceptor is Asp-68. Substrate is bound by residues Ser-69, 149–152, Lys-172, and 177–178; these read FGYD and HR.

The protein belongs to the HAM1 NTPase family. In terms of assembly, homodimer. Mg(2+) serves as cofactor.

It carries out the reaction XTP + H2O = XMP + diphosphate + H(+). It catalyses the reaction dITP + H2O = dIMP + diphosphate + H(+). The catalysed reaction is ITP + H2O = IMP + diphosphate + H(+). Its function is as follows. Pyrophosphatase that catalyzes the hydrolysis of nucleoside triphosphates to their monophosphate derivatives, with a high preference for the non-canonical purine nucleotides XTP (xanthosine triphosphate), dITP (deoxyinosine triphosphate) and ITP. Seems to function as a house-cleaning enzyme that removes non-canonical purine nucleotides from the nucleotide pool, thus preventing their incorporation into DNA/RNA and avoiding chromosomal lesions. This is dITP/XTP pyrophosphatase from Staphylococcus aureus (strain MRSA252).